The sequence spans 490 residues: Zinc finger protein STP4 (490 aa).

2 stretches are compositionally biased toward low complexity: residues 1-16 (MLVS…SVMS) and 52-73 (PSLP…STLN). The tract at residues 1 to 85 (MLVSSSFASS…PPPPLTTSYS (85 aa)) is disordered. Serine 153 and serine 155 each carry phosphoserine. Residues 231 to 247 (QQQQQLNSSSSASALPS) show a composition bias toward low complexity. The interval 231 to 273 (QQQQQLNSSSSASALPSIHSPLTNEHTSRYSSSLKDSAKITKQ) is disordered. Residues 250–265 (SPLTNEHTSRYSSSLK) are compositionally biased toward polar residues. A C2H2-type zinc finger spans residues 304–326 (HKCPICQRGFARNNDLIRHKKRH). Residues 338–375 (ESDNNSGADDQDDTARTSANNDSDDSNDKLAASSSSEE) are disordered.

It is found in the cytoplasm. The protein localises to the mitochondrion. The protein resides in the nucleus. The protein is Zinc finger protein STP4 (STP4) of Saccharomyces cerevisiae (strain ATCC 204508 / S288c) (Baker's yeast).